The primary structure comprises 76 residues: KANTR integral membrane protein (76 aa).

A signal peptide spans 1-25 (MSPFSLLILVICAFSLFFLINLSRG). The Extracellular portion of the chain corresponds to 26 to 34 (LSILLVFTK). The chain crosses the membrane as a helical span at residues 35 to 55 (NQLLALLLLSIVSLFSISLIS). Over 56–76 (ALIFFDLLPSTFFGFILLLFF) the chain is Cytoplasmic.

The protein localises to the membrane. The polypeptide is KANTR integral membrane protein (Mus musculus (Mouse)).